Here is a 495-residue protein sequence, read N- to C-terminus: ATP synthase subunit alpha, chloroplastic (495 aa).

170–177 (GDRQTGKT) provides a ligand contact to ATP.

This sequence belongs to the ATPase alpha/beta chains family. As to quaternary structure, F-type ATPases have 2 components, CF(1) - the catalytic core - and CF(0) - the membrane proton channel. CF(1) has five subunits: alpha(3), beta(3), gamma(1), delta(1), epsilon(1). CF(0) has four main subunits: a, b, b' and c.

The protein localises to the plastid. The protein resides in the chloroplast thylakoid membrane. The enzyme catalyses ATP + H2O + 4 H(+)(in) = ADP + phosphate + 5 H(+)(out). In terms of biological role, produces ATP from ADP in the presence of a proton gradient across the membrane. The alpha chain is a regulatory subunit. The polypeptide is ATP synthase subunit alpha, chloroplastic (Cyanidioschyzon merolae (strain NIES-3377 / 10D) (Unicellular red alga)).